A 421-amino-acid polypeptide reads, in one-letter code: MIIILKGGRVIDPRNRRDEDADIWMEDGQIIAPQETVPEDAKIYDLAGKWVVPGLIDMHVHLRDPGEEYKESIVTGTDAAAAGGFTAVACMPNTDPVNDTGSVTRYILEKSEGAAARVYPVGALSEGLKGESLAEYADMKHAGAVALTDDGNPVVSSQLMRRAMEYAKSHDMLVISHSEEPTLSKRGCMNEGLVATRLGLKGIPAVAESIMVQREIALAGLTGARLHIAHVSCIESLAAIRDAKKRGLPVTAETAPHYFSLTDDAVIGYDTHAKMNPPLRTEEHRQAIRQALADGTLDVIATDHAPHSIVEKEVTFEYAANGIVGLETSLGLSLALVRDGVLTPSRLVELMSSVPAQILSVAGGELGVGAIADVTVIDPELEHTFLIAEGRSRGANSPFDGWKLKGAATLTFVAGEESYCR.

Positions 59 and 61 each coordinate Zn(2+). Residues H61–R63 and N93 each bind substrate. Zn(2+)-binding residues include D150, H177, and H230. Residue N276 coordinates substrate. D303 is a binding site for Zn(2+). D303 is a catalytic residue. Substrate is bound at residue H307.

The protein belongs to the metallo-dependent hydrolases superfamily. DHOase family. Class I DHOase subfamily. It depends on Zn(2+) as a cofactor.

The catalysed reaction is (S)-dihydroorotate + H2O = N-carbamoyl-L-aspartate + H(+). The protein operates within pyrimidine metabolism; UMP biosynthesis via de novo pathway; (S)-dihydroorotate from bicarbonate: step 3/3. Catalyzes the reversible cyclization of carbamoyl aspartate to dihydroorotate. The chain is Dihydroorotase from Desulfotalea psychrophila (strain LSv54 / DSM 12343).